The chain runs to 84 residues: Small ribosomal subunit protein bS16 (84 aa).

This sequence belongs to the bacterial ribosomal protein bS16 family.

The polypeptide is Small ribosomal subunit protein bS16 (Ralstonia pickettii (strain 12J)).